A 167-amino-acid polypeptide reads, in one-letter code: Small ribosomal subunit protein uS7c (167 aa).

It belongs to the universal ribosomal protein uS7 family. In terms of assembly, part of the 30S ribosomal subunit.

Its subcellular location is the plastid. It is found in the chloroplast. One of the primary rRNA binding proteins, it binds directly to 16S rRNA where it nucleates assembly of the head domain of the 30S subunit. This is Small ribosomal subunit protein uS7c (rps7) from Tetradesmus obliquus (Green alga).